The following is a 48-amino-acid chain: Large ribosomal subunit protein eL40 (48 aa).

This sequence belongs to the eukaryotic ribosomal protein eL40 family.

The protein is Large ribosomal subunit protein eL40 of Methanospirillum hungatei JF-1 (strain ATCC 27890 / DSM 864 / NBRC 100397 / JF-1).